Consider the following 248-residue polypeptide: Octanoyltransferase (248 aa).

In terms of domain architecture, BPL/LPL catalytic spans 53–234 (ADTVDEIWIV…RLIANLDGES (182 aa)). Residues 93–100 (RGGQITYH), 165–167 (ALG), and 178–180 (GLS) contribute to the substrate site. The Acyl-thioester intermediate role is filled by Cys196.

It belongs to the LipB family.

The protein localises to the cytoplasm. The enzyme catalyses octanoyl-[ACP] + L-lysyl-[protein] = N(6)-octanoyl-L-lysyl-[protein] + holo-[ACP] + H(+). Its pathway is protein modification; protein lipoylation via endogenous pathway; protein N(6)-(lipoyl)lysine from octanoyl-[acyl-carrier-protein]: step 1/2. Functionally, catalyzes the transfer of endogenously produced octanoic acid from octanoyl-acyl-carrier-protein onto the lipoyl domains of lipoate-dependent enzymes. Lipoyl-ACP can also act as a substrate although octanoyl-ACP is likely to be the physiological substrate. This Burkholderia multivorans (strain ATCC 17616 / 249) protein is Octanoyltransferase.